The primary structure comprises 177 residues: Cytoglobin-1 (177 aa).

The 150-residue stretch at 16–165 (PLTDKERVMI…LCCSIKAVYE (150 aa)) folds into the Globin domain. His-79 and His-111 together coordinate heme b.

This sequence belongs to the globin family. Monomeric.

Its subcellular location is the cytoplasm. The protein localises to the nucleus. It catalyses the reaction Fe(II)-heme b-[protein] + nitric oxide + O2 = Fe(III)-heme b-[protein] + nitrate. The catalysed reaction is Fe(III)-heme b-[protein] + nitric oxide + H2O = Fe(II)-heme b-[protein] + nitrite + 2 H(+). It carries out the reaction 2 superoxide + 2 H(+) = H2O2 + O2. The enzyme catalyses H2O2 + AH2 = A + 2 H2O. In terms of biological role, probable multifunctional globin with a hexacoordinated heme iron required for the catalysis of various reactions depending on redox condition of the cell as well as oxygen availability. Has a nitric oxide dioxygenase (NOD) activity and is most probably involved in cell-mediated and oxygen-dependent nitric oxide consumption. Under normoxic conditions functions as a nitric oxide dioxygenase (NOD) but under hypoxic conditions the globin may switch its function to that of a nitrite (NO2) reductase (NiR), generating nitric oxide. Could also have peroxidase and superoxide dismutase activities, detoxifying reactive oxygen species and protecting cells against oxidative stress. Also binds dioxygen with low affinity and could function as an oxygen sensor but has probably no function as a respiratory oxygen carrier. This Oryzias latipes (Japanese rice fish) protein is Cytoglobin-1.